A 428-amino-acid chain; its full sequence is Zinc-type alcohol dehydrogenase B (428 aa).

The Zn(2+) site is built by cysteine 116, histidine 137, cysteine 167, cysteine 170, cysteine 173, and cysteine 181. The residue at position 393 (lysine 393) is an N6-benzoyllysine.

The protein belongs to the zinc-containing alcohol dehydrogenase family. Class-III subfamily. As to quaternary structure, homodimer. The cofactor is Zn(2+). Post-translationally, benzoylation at lys-393 by gcnE leads to the activation od adhB.

It catalyses the reaction a primary alcohol + NAD(+) = an aldehyde + NADH + H(+). The catalysed reaction is a secondary alcohol + NAD(+) = a ketone + NADH + H(+). Zinc-type alcohol dehydrogenase involved in development, secondary metabolism, pathogenicity, and stress response. Specifically controls the formation of sclerotia and the biosynthesis of aflatoxin. Contribute to seed colonization of A flavus on host maize seed. This chain is Zinc-type alcohol dehydrogenase B, found in Aspergillus flavus (strain ATCC 200026 / FGSC A1120 / IAM 13836 / NRRL 3357 / JCM 12722 / SRRC 167).